Here is a 361-residue protein sequence, read N- to C-terminus: RNA 3'-terminal phosphate cyclase (361 aa).

Positions 105, 132, 295, 298, 299, and 321 each coordinate ATP. The Tele-AMP-histidine intermediate role is filled by His-321.

This sequence belongs to the RNA 3'-terminal cyclase family. Type 1 subfamily.

It localises to the nucleus. The protein resides in the nucleoplasm. It catalyses the reaction a 3'-end 3'-phospho-ribonucleotide-RNA + ATP = a 3'-end 2',3'-cyclophospho-ribonucleotide-RNA + AMP + diphosphate. Functionally, catalyzes the conversion of 3'-phosphate to a 2',3'-cyclic phosphodiester at the end of RNA. The mechanism of action of the enzyme occurs in 3 steps: (A) adenylation of the enzyme by ATP; (B) transfer of adenylate to an RNA-N3'P to produce RNA-N3'PP5'A; (C) and attack of the adjacent 2'-hydroxyl on the 3'-phosphorus in the diester linkage to produce the cyclic end product. Likely functions in some aspects of cellular RNA processing. Function plays an important role in a RNA repair and splicing pathway which controls axon regeneration in response to peripheral (PNS) and central nervous system (CNS) injury. In response to axotomy, negatively regulates splicing of Xbp1 which in turn activates downstream effectors which inhibit axon regeneration, including down-regulating the microtubule regulators ringer and futsch. The sequence is that of RNA 3'-terminal phosphate cyclase from Drosophila melanogaster (Fruit fly).